The primary structure comprises 276 residues: Tumor necrosis factor-inducible gene 6 protein (276 aa).

A signal peptide spans 1 to 17; that stretch reads MIILIYLFVLVWEEAQG. The region spanning 36 to 129 is the Link domain; the sequence is GVYHREARSG…SERWDAYCYN (94 aa). Cystine bridges form between cysteine 58–cysteine 127, cysteine 82–cysteine 103, and cysteine 135–cysteine 161. Asparagine 118 is a glycosylation site (N-linked (GlcNAc...) asparagine). The CUB domain occupies 135-247; sequence CGGVFTDPKR…GGFQIKYVTV (113 aa). Residues glutamate 183, aspartate 191, aspartate 232, serine 234, and valine 235 each contribute to the Ca(2+) site. Cysteine 188 and cysteine 210 form a disulfide bridge. An N-linked (GlcNAc...) asparagine glycan is attached at asparagine 258.

In terms of assembly, interacts (via Link domain) with inter-alpha-inhibitor (I-alpha-I) component bikunin. Interacts with ITIH2/HC2; this interaction is required for transesterification of the HC to hyaluronan. Interacts (via Link and CUB domains) with ITIH1. Chondroitin sulfate may be required for the stability of the complex. Interacts (via Link domain) with various C-X-C and C-C chemokines including PF4, CXCL8, CXCL11, CXCL12, CCL2, CCL7, CCL19, CCL21, and CCL27; this interaction interferes with chemokine binding to glycosaminoglycans. Interacts (primarily via Link domain) with BMP2; this interaction is inhibited by hyaluronan. Interacts (via both Link and CUB domains) with TNFSF11. Interacts (via CUB domain) with FN1 (via type III repeats 9-14); this interaction enhances fibronectin fibril assembly. TNFAIP6 may act as a bridging molecule between FN1 and THBS1. As to expression, vascular smooth muscle cells.

It is found in the secreted. Its function is as follows. Major regulator of extracellular matrix organization during tissue remodeling. Catalyzes the transfer of a heavy chain (HC) from inter-alpha-inhibitor (I-alpha-I) complex to hyaluronan. Cleaves the ester bond between the C-terminus of the HC and GalNAc residue of the chondroitin sulfate chain in I-alpha-I complex followed by transesterification of the HC to hyaluronan. In the process, potentiates the antiprotease function of I-alpha-I complex through release of free bikunin. Acts as a catalyst in the formation of hyaluronan-HC oligomers and hyaluronan-rich matrix surrounding the cumulus cell-oocyte complex, a necessary step for oocyte fertilization. Assembles hyaluronan in pericellular matrices that serve as platforms for receptor clustering and signaling. Enables binding of hyaluronan deposited on the surface of macrophages to LYVE1 on lymphatic endothelium and facilitates macrophage extravasation. Alters hyaluronan binding to functionally latent CD44 on vascular endothelium, switching CD44 into an active state that supports leukocyte rolling. Modulates the interaction of chemokines with extracellular matrix components and proteoglycans on endothelial cell surface, likely preventing chemokine gradient formation. In a negative feedback mechanism, may limit excessive neutrophil recruitment at inflammatory sites by antagonizing the association of CXCL8 with glycosaminoglycans on vascular endothelium. Has a role in osteogenesis and bone remodeling. Inhibits BMP2-dependent differentiation of mesenchymal stem cell to osteoblasts. Protects against bone erosion during inflammation by inhibiting TNFSF11/RANKL-dependent osteoclast activation. The polypeptide is Tumor necrosis factor-inducible gene 6 protein (TNFAIP6) (Oryctolagus cuniculus (Rabbit)).